Consider the following 549-residue polypeptide: Polymorphic pseudokinase ROP5 (549 aa).

The first 24 residues, 1–24, serve as a signal peptide directing secretion; the sequence is MATKLARLATWLVLVGCLLWRAGA. The Protein kinase domain occupies 234 to 527; that stretch reads LKLVEPLRVG…LEAMETPEFL (294 aa). 10 residues coordinate ATP: Arg-241, Asp-244, Arg-245, Ser-246, Lys-263, Met-337, Pro-338, Ala-340, Asp-343, and Asp-393. Asp-244 contributes to the ADP binding site. Ser-246, Lys-263, Met-337, Pro-338, and Ala-340 together coordinate ADP. Position 393 (Asp-393) interacts with ADP. Positions 393 and 407 each coordinate Mg(2+). N-linked (GlcNAc...) asparagine glycosylation is present at Asn-434. Cys-458 and Cys-492 are disulfide-bonded.

It belongs to the protein kinase superfamily. Ser/Thr protein kinase family. Component of a complex at least composed of ROP18 and ROP5. Interacts with GRA7. Interacts with ROP17. Interacts with mouse IRGA6/IIGP1; the interaction results in inhibition of IRGA6/IIGP1 GTPase activity and/or oligomerization.

It is found in the secreted. The protein localises to the parasitophorous vacuole. It localises to the cytoplasmic vesicle. The protein resides in the secretory vesicle. Its subcellular location is the rhoptry. Its function is as follows. Pseudokinase. Essential for virulence in the type I lineage. Mediates parasite survival in mouse monocytes. Required for the parasite ability to resist mouse innate immune effectors triggered by the IFN-gamma (IFNG). Reduces the accumulation of mouse IRGA6 (IIGP1) and IRGB6 (TGTP1/TGTP2), immunity-related GTPases (IRGs) that protect mice from infection by certain intracellular pathogens, on the parasitophorous vacuole and IRG-mediated killing of parasites by mouse cells. Regulates the activity of ROP18, an active kinase that targets IRGs to prevent IRG-mediated parasite killing by mouse cells. Acts as an allosteric inhibitor of mouse IRGA6 (IIGP1). Does not affect IFN-gamma (IFNG)-mediated parasite killing in human cells that do not possess the large variety of IRGs. The polypeptide is Polymorphic pseudokinase ROP5 (Toxoplasma gondii).